Consider the following 85-residue polypeptide: Putative defensin-like protein 258 (85 aa).

Positions methionine 1–alanine 25 are cleaved as a signal peptide. 3 cysteine pairs are disulfide-bonded: cysteine 57-cysteine 75, cysteine 63-cysteine 82, and cysteine 67-cysteine 84.

The protein belongs to the DEFL family.

Its subcellular location is the secreted. The chain is Putative defensin-like protein 258 from Arabidopsis thaliana (Mouse-ear cress).